The primary structure comprises 91 residues: Large ribosomal subunit protein eL37 (91 aa).

Residues Cys19, Cys22, Cys34, and Cys37 each coordinate Zn(2+). A C4-type zinc finger spans residues 19–37 (CKRCGKSSFHIQKKRCASC).

Belongs to the eukaryotic ribosomal protein eL37 family. Zn(2+) is required as a cofactor.

Its function is as follows. Binds to the 23S rRNA. This chain is Large ribosomal subunit protein eL37, found in Caenorhabditis elegans.